The chain runs to 215 residues: ER lumen protein-retaining receptor B (215 aa).

6 helical membrane-spanning segments follow: residues 6–26 (LAGDMTHLASVLVLLLKIHTI), 55–77 (FVSLYNTSMKLVFLGSSFSIVWY), 98–118 (WFLVLPCFLLALLIHEKFTFL), 120–140 (VLWTSSLYLEAVAILPQLVLL), 149–169 (LTGQYIFLLGGYRGLYILNWI), and 178–198 (FVHWITWIAGFVQTLLYADFF).

Belongs to the ERD2 family.

It localises to the golgi apparatus membrane. Its subcellular location is the endoplasmic reticulum membrane. In terms of biological role, determines the specificity of the luminal endoplasmic reticulum protein retention system. Required for the retro-transport of calreticulin-3 (CRT3) from the Golgi to the ER. Specifically required for elongation factor Tu receptor (EFR) function in response to the pathogen-associated molecular pattern (PAMP) elf18. The polypeptide is ER lumen protein-retaining receptor B (ERD2B) (Arabidopsis thaliana (Mouse-ear cress)).